A 585-amino-acid polypeptide reads, in one-letter code: MLLEAIFHEAKGSYAYPISETQLRVRLRAKKGDVVRCEVLYADRYASPEEELAHALAGKAGSDERFDYFEALLECSTKRVKYVFLLTGPQGEAVYFGETGFSAERSKAGVFQYAYIHRSEVFTTPEWAKEAVIYQIFPERFANGDPSNDPPGTEQWAKDARPRHDSFYGGDLKGVIDRLPYLEELGVTALYFTPIFASPSHHKYDTADYLAIDPQFGDLPTFRRLVDEAHRRGIKIILDAVFNHAGDQFFAFRDVLQKGEQSRYKDWFFIEDFPVSKTSRTNYETFAVQVPAMPKLRTENPEVKEYLFDVARFWMEQGIDGWRLDVANEVDHAFWREFRRLVKSLNPDALIVGEIWHDASGWLMGDQFDSVMNYLFRESVIRFFATGEIHAERFDAELTRARMLYPEQAAQGLWNLLDSHDTERFLTSCGGNEAKFRLAVLFQMTYLGTPLIYYGDEIGMAGATDPDCRRPMIWEEKEQNRGLFEFYKELIRLRHRLASLTRGNVRSWHADKQANLYAFVRTVQDQHVGVVLNNRGEKQTVLLQVPESGGKTWLDCLTGEEVHGKQGQLKLTLRPYQGMILWNGR.

Ca(2+) is bound by residues Asn143, Asp145, Asn148, Asp149, Gly169, and Asp171. The substrate site is built by His244 and Arg323. Catalysis depends on Asp325, which acts as the Nucleophile. The active-site Proton donor is Glu354. Substrate contacts are provided by residues 420-421 (HD), Asp465, and Arg469.

This sequence belongs to the glycosyl hydrolase 13 family. As to quaternary structure, monomer. Ca(2+) serves as cofactor.

The enzyme catalyses Hydrolysis of pullulan to panose (6-alpha-D-glucosylmaltose).. Functionally, hydrolyzes pullulan efficiently but only a small amount of starch. Endohydrolysis of 1,4-alpha-glucosidic linkages in pullulan to form panose. Also cleaves (1-6)-alpha-glucosidic linkages to form maltotriose. The chain is Neopullulanase 2 (tvaII) from Thermoactinomyces vulgaris.